Reading from the N-terminus, the 747-residue chain is Pyrin (747 aa).

The region spanning 1-92 (MANTRVDHLL…AEELHKATGP (92 aa)) is the Pyrin domain. The disordered stretch occupies residues 89–181 (ATGPEHLTEE…GARSAAPLYR (93 aa)). Residues 122–135 (PGEDEAQQNDDESD) show a composition bias toward acidic residues. Residues C442, H445, C465, and H471 each contribute to the Zn(2+) site. Residues 442–479 (CPRHMKQVQLLFCEDHREPICLICRLSQEHQGHRVRPI) form a B box-type zinc finger. The stretch at 479 to 508 (IEEAALQYKEQIRKQLERLREMRGYVEEHK) forms a coiled coil. Residues 487 to 645 (KEQIRKQLER…RFSEMLGSEM (159 aa)) form a required for homotrimerization and induction of pyroptosomes region. Residues 698–720 (EPQDYLHPSSAQDTPELHEIHSQ) form a disordered region.

In terms of assembly, homotrimer. Interacts (via the B box-type zinc finger) with PSTPIP1. Interacts (via the B30.2/SPRY domain) with several components of the inflammasome complex, including CASP1 p20 and p10 subunits, CASP5, PYCARD, NLRP1, NLRP2 and NLRP3, as well as with unprocessed IL1B; this interaction may lead to autophagic degradation of these proteins. Component of the AIM2 PANoptosome complex, a multiprotein complex that drives inflammatory cell death (PANoptosis). Interacts with NFKBIA and RELA. Interacts weakly with VASP and ACTR3. Interacts with active ULK1 (phosphorylated on 'Ser-317') and BECN1 simultaneously. Also interacts with ATG16L1 (via WD repeats), and with ATG8 family members, including GABARAP, GABARAPL1 and, to a lesser extent, GABARAPL2, MAP1LC3A/LC3A and MAP1LC3C/LC3C. Interacts with TRIM21. Interacts with YWHAB, YWHAE, YWHAG, YWHAH, YWHAQ and YWHAZ; the interaction is required for the down-regulation of pyrin pro-inflammatory activity. Post-translationally, degraded along with the delivery of its substrates to autolysosomal compartments (at protein level). Expressed in spleen and, to a lesser degree in the lung. Not expressed in thymus, testis, ovary, heart, brain, liver, kidney and muscle.

It is found in the cytoplasm. It localises to the cytoskeleton. The protein localises to the cell projection. The protein resides in the ruffle. Its subcellular location is the lamellipodium. It is found in the cytoplasmic vesicle. It localises to the autophagosome. The protein localises to the nucleus. Its function is as follows. Involved in the regulation of innate immunity and the inflammatory response in response to IFNG/IFN-gamma. Organizes autophagic machinery by serving as a platform for the assembly of ULK1, Beclin 1/BECN1, ATG16L1, and ATG8 family members and recognizes specific autophagy targets, thus coordinating target recognition with assembly of the autophagic apparatus and initiation of autophagy. Acts as an autophagy receptor for the degradation of several inflammasome components, including CASP1, NLRP1 and NLRP3, hence preventing excessive IL1B- and IL18-mediated inflammation. However, it can also have a positive effect in the inflammatory pathway, acting as an innate immune sensor that triggers PYCARD/ASC specks formation, caspase-1 activation, and IL1B and IL18 production. Together with AIM2, also acts as a mediator of pyroptosis, necroptosis and apoptosis (PANoptosis), an integral part of host defense against pathogens, in response to bacterial infection. It is required for PSTPIP1-induced PYCARD/ASC oligomerization and inflammasome formation. Recruits PSTPIP1 to inflammasomes, and is required for PSTPIP1 oligomerization. In Rattus norvegicus (Rat), this protein is Pyrin.